The primary structure comprises 517 residues: PSTB2-interacting protein 1 (517 aa).

Interacts with PDR17/PSTB2 and SCS2.

In terms of biological role, phosphatidic acid-binding protein involved in interorganelle phosphatidylserine (PtdSer) transport. Linkks a PtdSer donor membrane (via binding of SCS2 and phosphatidic acid present in the donor membrane) with an acceptor membrane (via its interaction with PDR17), forming a zone of apposition that facilitates PtdSer transfer. The protein is PSTB2-interacting protein 1 of Saccharomyces cerevisiae (strain ATCC 204508 / S288c) (Baker's yeast).